The chain runs to 338 residues: 3-isopropylmalate dehydrogenase (338 aa).

Substrate contacts are provided by Arg-88, Arg-98, Arg-122, and Asp-212. Positions 212, 236, and 240 each coordinate Mg(2+). 272-284 (GSAPDIAGQGIAD) lines the NAD(+) pocket.

This sequence belongs to the isocitrate and isopropylmalate dehydrogenases family. LeuB type 2 subfamily. As to quaternary structure, homodimer. Mg(2+) serves as cofactor. Requires Mn(2+) as cofactor.

The protein resides in the cytoplasm. The catalysed reaction is (2R,3S)-3-isopropylmalate + NAD(+) = 4-methyl-2-oxopentanoate + CO2 + NADH. Its pathway is amino-acid biosynthesis; L-leucine biosynthesis; L-leucine from 3-methyl-2-oxobutanoate: step 3/4. Functionally, catalyzes the oxidation of 3-carboxy-2-hydroxy-4-methylpentanoate (3-isopropylmalate) to 3-carboxy-4-methyl-2-oxopentanoate. The product decarboxylates to 4-methyl-2 oxopentanoate. This chain is 3-isopropylmalate dehydrogenase, found in Corynebacterium jeikeium (strain K411).